Consider the following 30-residue polypeptide: Sperm protamine P5 (30 aa).

Residues 1–30 (YRRRRRRGRRGRRRRGRRRRSRGRRRAHGG) are disordered.

Testis.

Its subcellular location is the nucleus. The protein resides in the chromosome. In terms of biological role, protamines substitute for histones in the chromatin of sperm during the haploid phase of spermatogenesis. They compact sperm DNA into a highly condensed, stable and inactive complex. This Octopus vulgaris (Common octopus) protein is Sperm protamine P5.